Here is a 385-residue protein sequence, read N- to C-terminus: Cell wall mannoprotein PIR1 (385 aa).

The signal sequence occupies residues 1-18 (MKYSTLVSIAAFISTSLA). PIR1/2/3 repeat units follow at residues 78-96 (ATPV…TTGG), 97-115 (VSAI…TNAA), 116-133 (QPIA…TTAK), 136-153 (ATPV…QTTV), 154-171 (QPVA…TAKA), 173-190 (ATPV…QTTV), 191-208 (QPVA…TVKA), 210-228 (ATPV…TTAA), and 233-251 (ASAV…TTTA). Residues 257-282 (AQSDGQAIATGSPSSNSTLSDDDDLS) form a disordered region. Asn-272 carries N-linked (GlcNAc...) asparagine glycosylation.

Belongs to the PIR protein family. Post-translationally, covalently linked to beta-1,3-glucan of the inner cell wall layer via an alkali-sensitive ester linkage between the gamma-carboxyl group of glutamic acids, arising from specific glutamines within the PIR1/2/3 repeats, and hydroxyl groups of glucoses of beta-1,3-glucan chains. Highly O-glycosylated by PMT1 and contains one N-mannosylated chain.

Its subcellular location is the secreted. The protein localises to the cell wall. Its function is as follows. Component of the outer cell wall layer required for stability of the cell wall and specifically for cell wall rigidity. The polypeptide is Cell wall mannoprotein PIR1 (PIR1) (Candida albicans (strain SC5314 / ATCC MYA-2876) (Yeast)).